The chain runs to 120 residues: MNTVSVVQFLAVGCAVFVLYGRGVFAAEGVKKAGQHKDAELCLGSDGLGHRLDEFWYNDDMCQRFLCFKDDEGIMYEQIANCPIAIAEGDCTLKPGTKGHYPDCCPAVECPPEDQKEEEI.

The first 26 residues, 1 to 26 (MNTVSVVQFLAVGCAVFVLYGRGVFA), serve as a signal peptide directing secretion.

The protein belongs to the scoloptoxin-16 family. In terms of processing, contains 4 disulfide bonds. As to expression, expressed by the venom gland.

The protein resides in the secreted. The protein is U-scoloptoxin(16)-Er2a of Ethmostigmus rubripes (Giant centipede).